Here is a 454-residue protein sequence, read N- to C-terminus: Bifunctional protein GlmU (454 aa).

Residues 1–228 form a pyrophosphorylase region; that stretch reads MTLPLHVVIL…PQDVEGANDP (228 aa). UDP-N-acetyl-alpha-D-glucosamine contacts are provided by residues 10–13, Lys-24, Gln-76, 81–82, 103–105, Gly-138, Glu-153, Asn-168, and Asn-226; these read LAAG, GT, and YGD. Asp-105 is a Mg(2+) binding site. A Mg(2+)-binding site is contributed by Asn-226. Positions 229 to 249 are linker; that stretch reads WQLAQLERAWQLRAARALCLQ. The segment at 250–454 is N-acetyltransferase; the sequence is GVRMADPARV…IEGWERPKKK (205 aa). Arg-332 and Lys-350 together coordinate UDP-N-acetyl-alpha-D-glucosamine. The Proton acceptor role is filled by His-362. UDP-N-acetyl-alpha-D-glucosamine is bound by residues Tyr-365 and Asn-376. Residues Ala-379, 385–386, Ser-404, Ala-422, and Arg-439 each bind acetyl-CoA; that span reads NY.

It in the N-terminal section; belongs to the N-acetylglucosamine-1-phosphate uridyltransferase family. The protein in the C-terminal section; belongs to the transferase hexapeptide repeat family. Homotrimer. Mg(2+) serves as cofactor.

It localises to the cytoplasm. The enzyme catalyses alpha-D-glucosamine 1-phosphate + acetyl-CoA = N-acetyl-alpha-D-glucosamine 1-phosphate + CoA + H(+). It catalyses the reaction N-acetyl-alpha-D-glucosamine 1-phosphate + UTP + H(+) = UDP-N-acetyl-alpha-D-glucosamine + diphosphate. Its pathway is nucleotide-sugar biosynthesis; UDP-N-acetyl-alpha-D-glucosamine biosynthesis; N-acetyl-alpha-D-glucosamine 1-phosphate from alpha-D-glucosamine 6-phosphate (route II): step 2/2. It functions in the pathway nucleotide-sugar biosynthesis; UDP-N-acetyl-alpha-D-glucosamine biosynthesis; UDP-N-acetyl-alpha-D-glucosamine from N-acetyl-alpha-D-glucosamine 1-phosphate: step 1/1. It participates in bacterial outer membrane biogenesis; LPS lipid A biosynthesis. Catalyzes the last two sequential reactions in the de novo biosynthetic pathway for UDP-N-acetylglucosamine (UDP-GlcNAc). The C-terminal domain catalyzes the transfer of acetyl group from acetyl coenzyme A to glucosamine-1-phosphate (GlcN-1-P) to produce N-acetylglucosamine-1-phosphate (GlcNAc-1-P), which is converted into UDP-GlcNAc by the transfer of uridine 5-monophosphate (from uridine 5-triphosphate), a reaction catalyzed by the N-terminal domain. The protein is Bifunctional protein GlmU of Xanthomonas campestris pv. campestris (strain 8004).